A 143-amino-acid chain; its full sequence is Small ribosomal subunit protein uS12 (143 aa).

Over residues 1–20 the composition is skewed to basic residues; that stretch reads MGKCRGLRTARKLRSHRRDH. Positions 1–26 are disordered; the sequence is MGKCRGLRTARKLRSHRRDHKWHDKQ. Lys-37 participates in a covalent cross-link: Glycyl lysine isopeptide (Lys-Gly) (interchain with G-Cter in SUMO2). An N6-succinyllysine modification is found at Lys-54. 3-hydroxyproline is present on Pro-62. Lys-135 is modified (N6-acetyllysine).

The protein belongs to the universal ribosomal protein uS12 family. As to quaternary structure, component of the 40S small ribosomal subunit. Part of the small subunit (SSU) processome, composed of more than 70 proteins and the RNA chaperone small nucleolar RNA (snoRNA) U3. In terms of assembly, (Microbial infection) Interacts with the African swine fever virus (ASFV) ubiquitin-conjugating enzyme UBCv1; this interaction probably plays a role in the viral regulation of host protein synthesis. In terms of processing, hydroxylation at Pro-62 affects translation termination efficiency.

Its subcellular location is the cytoplasm. The protein resides in the cytosol. The protein localises to the rough endoplasmic reticulum. It localises to the nucleus. It is found in the nucleolus. Functionally, component of the ribosome, a large ribonucleoprotein complex responsible for the synthesis of proteins in the cell. The small ribosomal subunit (SSU) binds messenger RNAs (mRNAs) and translates the encoded message by selecting cognate aminoacyl-transfer RNA (tRNA) molecules. The large subunit (LSU) contains the ribosomal catalytic site termed the peptidyl transferase center (PTC), which catalyzes the formation of peptide bonds, thereby polymerizing the amino acids delivered by tRNAs into a polypeptide chain. The nascent polypeptides leave the ribosome through a tunnel in the LSU and interact with protein factors that function in enzymatic processing, targeting, and the membrane insertion of nascent chains at the exit of the ribosomal tunnel. Plays an important role in translational accuracy. Part of the small subunit (SSU) processome, first precursor of the small eukaryotic ribosomal subunit. During the assembly of the SSU processome in the nucleolus, many ribosome biogenesis factors, an RNA chaperone and ribosomal proteins associate with the nascent pre-rRNA and work in concert to generate RNA folding, modifications, rearrangements and cleavage as well as targeted degradation of pre-ribosomal RNA by the RNA exosome. This Sus scrofa (Pig) protein is Small ribosomal subunit protein uS12 (RPS23).